Here is a 969-residue protein sequence, read N- to C-terminus: Protein translocase subunit SecA (969 aa).

ATP-binding positions include glutamine 99, 117–121, and aspartate 631; that span reads GEGKT.

The protein belongs to the SecA family. As to quaternary structure, monomer and homodimer. Part of the essential Sec protein translocation apparatus which comprises SecA, SecYEG and auxiliary proteins SecDF. Other proteins may also be involved.

The protein resides in the cell inner membrane. It localises to the cytoplasm. The catalysed reaction is ATP + H2O + cellular proteinSide 1 = ADP + phosphate + cellular proteinSide 2.. Part of the Sec protein translocase complex. Interacts with the SecYEG preprotein conducting channel. Has a central role in coupling the hydrolysis of ATP to the transfer of proteins into and across the cell membrane, serving as an ATP-driven molecular motor driving the stepwise translocation of polypeptide chains across the membrane. In Chlamydia trachomatis serovar L2 (strain ATCC VR-902B / DSM 19102 / 434/Bu), this protein is Protein translocase subunit SecA.